The primary structure comprises 382 residues: D-galactonate dehydratase (382 aa).

Asp-183 provides a ligand contact to Mg(2+). The Proton donor role is filled by His-185. Mg(2+)-binding residues include Glu-209 and Glu-235. His-285 functions as the Proton acceptor in the catalytic mechanism. Residues 361 to 382 (NENPPDWRNPVWRHSDGSIAEW) form a disordered region.

This sequence belongs to the mandelate racemase/muconate lactonizing enzyme family. GalD subfamily. Mg(2+) serves as cofactor.

It carries out the reaction D-galactonate = 2-dehydro-3-deoxy-D-galactonate + H2O. It participates in carbohydrate acid metabolism; D-galactonate degradation; D-glyceraldehyde 3-phosphate and pyruvate from D-galactonate: step 1/3. In terms of biological role, catalyzes the dehydration of D-galactonate to 2-keto-3-deoxy-D-galactonate. The sequence is that of D-galactonate dehydratase from Xanthomonas axonopodis pv. citri (strain 306).